A 780-amino-acid chain; its full sequence is Mediator of RNA polymerase II transcription subunit 15 (780 aa).

Positions 1–124 are interaction with nhr-49; the sequence is MSEEDWPSPK…PQPTSAQARN (124 aa). The interaction with sbp-1 stretch occupies residues 2–96; sequence SEEDWPSPKF…SPPCTTAALL (95 aa). 3 disordered regions span residues 91 to 152, 166 to 363, and 564 to 597; these read TTAA…APSA, PSPD…QGMM, and GPGP…GTPN. The segment covering 125–139 has biased composition (low complexity); the sequence is PPVTVATTQASTTPS. Gly residues predominate over residues 225–245; that stretch reads PPNGYGGYGMMNGPPGSGAPM. A compositionally biased stretch (polar residues) spans 296–316; sequence QGATPTGPSSVLESLINQPQQ. 2 stretches are compositionally biased toward low complexity: residues 333 to 353 and 574 to 594; these read AAQR…QQQR and SMSG…NPMG.

The protein belongs to the Mediator complex subunit 15 family. As to quaternary structure, component of the Mediator complex. Interacts with nhr-49, nhr-64 and sbp-1. Expressed in the intestine and head neurons.

It is found in the nucleus. Functionally, component of the Mediator complex, a coactivator involved in regulated gene transcription of nearly all RNA polymerase II-dependent genes. Mediator functions as a bridge to convey information from gene-specific regulatory proteins to the basal RNA polymerase II transcription machinery. Mediator is recruited to promoters by direct interactions with regulatory proteins and serves as a scaffold for the assembly of a functional preinitiation complex with RNA polymerase II and the general transcription factors. Required for regulated expression of genes controlling fatty acid desaturation by transcription factors including sbp-1 and nhr-49. Involved in the response to simulated microgravity, in concert with sbp-1, probably acting in the intestine. This Caenorhabditis elegans protein is Mediator of RNA polymerase II transcription subunit 15 (mdt-15).